The sequence spans 178 residues: Large ribosomal subunit protein bL35m (178 aa).

This sequence belongs to the bacterial ribosomal protein bL35 family.

It localises to the mitochondrion. The sequence is that of Large ribosomal subunit protein bL35m (mRpL35) from Drosophila melanogaster (Fruit fly).